The primary structure comprises 442 residues: Na(+)/H(+) antiporter NhaA (442 aa).

The next 11 membrane-spanning stretches (helical) occupy residues 32-52 (IGGG…NSPW), 73-93 (LTLA…VAGL), 111-131 (AVPV…YALV), 139-159 (AGWA…LAVI), 170-190 (FLLT…AVVY), 193-213 (HLSI…TLLV), 234-254 (VHAS…AVPV), 284-304 (VAVP…LSGL), 316-336 (VVLG…FLVA), 352-372 (VLGL…IGEL), and 383-403 (HVKI…AVVL). Residues 423–435 (HDGIPDVYQDLHR) are compositionally biased toward basic and acidic residues. The interval 423–442 (HDGIPDVYQDLHRSSPRPWG) is disordered.

Belongs to the NhaA Na(+)/H(+) (TC 2.A.33) antiporter family.

It localises to the cell membrane. It catalyses the reaction Na(+)(in) + 2 H(+)(out) = Na(+)(out) + 2 H(+)(in). Na(+)/H(+) antiporter that extrudes sodium in exchange for external protons. This chain is Na(+)/H(+) antiporter NhaA, found in Frankia casuarinae (strain DSM 45818 / CECT 9043 / HFP020203 / CcI3).